A 715-amino-acid polypeptide reads, in one-letter code: Elongation factor G (715 aa).

Residues 8-290 (NRYRNIGICA…AVIDFLPAPT (283 aa)) form the tr-type G domain. GTP is bound by residues 17–24 (AHVDAGKT), 88–92 (DTPGH), and 142–145 (NKMD).

It belongs to the TRAFAC class translation factor GTPase superfamily. Classic translation factor GTPase family. EF-G/EF-2 subfamily.

Its subcellular location is the cytoplasm. Its function is as follows. Catalyzes the GTP-dependent ribosomal translocation step during translation elongation. During this step, the ribosome changes from the pre-translocational (PRE) to the post-translocational (POST) state as the newly formed A-site-bound peptidyl-tRNA and P-site-bound deacylated tRNA move to the P and E sites, respectively. Catalyzes the coordinated movement of the two tRNA molecules, the mRNA and conformational changes in the ribosome. This chain is Elongation factor G, found in Pseudomonas fluorescens (strain ATCC BAA-477 / NRRL B-23932 / Pf-5).